The sequence spans 784 residues: 1-phosphatidylinositol 4,5-bisphosphate phosphodiesterase delta-3-A (784 aa).

The interval 1 to 25 (MLGRKKNPETVQTESKSVESKTHDP) is disordered. Basic and acidic residues predominate over residues 16–25 (KSVESKTHDP). Residues 38 to 149 (LLMLQGSKMM…WVRGIRTLKD (112 aa)) enclose the PH domain. The tract at residues 48–78 (KVRSQRWRKDRRLKLLEDCVTVWCESSKTSR) is substrate binding. EF-hand domains follow at residues 159 to 194 (KLDHWIRGYLRRADQNQDGKMSYDEVKHLLQLINID), 195 to 230 (LNEQYARTLFKKCDRSCDGRLDHVEIEEFCREMMRR), and 227 to 262 (MMRRPELDAVFRHYSGNGCVLTTLELRDFLGDQGED). The Ca(2+) site is built by Asp172, Asn174, Asp176, Lys178, Glu183, Asp208, Ser210, Asp212, Arg214, and Glu219. In terms of domain architecture, PI-PLC X-box spans 313–458 (QDMSKPLAHY…LKGRILLKGK (146 aa)). His328 is a catalytic residue. Ca(2+)-binding residues include Asn329, Glu358, and Asp360. The active site involves His373. Glu407 is a Ca(2+) binding site. Substrate contacts are provided by Lys456 and Lys458. Residues 473–498 (FTNSSDEESVAGGNKKESKKDLARSA) form a disordered region. Over residues 486 to 495 (NKKESKKDLA) the composition is skewed to basic and acidic residues. The PI-PLC Y-box domain maps to 506–621 (LSDLVVYCQS…GYVLKPEFLC (116 aa)). 2 residues coordinate substrate: Ser534 and Arg561. A C2 domain is found at 621–750 (CDPKSDFDPE…TGYRHVHLLK (130 aa)). Ca(2+) is bound by residues Ile664, Asp666, Asn690, Asp719, and Asp721.

The cofactor is Ca(2+).

The protein resides in the membrane. Its subcellular location is the cytoplasm. The protein localises to the cleavage furrow. The catalysed reaction is a 1,2-diacyl-sn-glycero-3-phospho-(1D-myo-inositol-4,5-bisphosphate) + H2O = 1D-myo-inositol 1,4,5-trisphosphate + a 1,2-diacyl-sn-glycerol + H(+). Hydrolyzes the phosphatidylinositol 4,5-bisphosphate (PIP2) to generate 2 second messenger molecules diacylglycerol (DAG) and inositol 1,4,5-trisphosphate (IP3). DAG mediates the activation of protein kinase C (PKC), while IP3 releases Ca(2+) from intracellular stores. In Danio rerio (Zebrafish), this protein is 1-phosphatidylinositol 4,5-bisphosphate phosphodiesterase delta-3-A (plcd3a).